Here is a 236-residue protein sequence, read N- to C-terminus: Large ribosomal subunit protein uL1 (236 aa).

Belongs to the universal ribosomal protein uL1 family. As to quaternary structure, part of the 50S ribosomal subunit.

Binds directly to 23S rRNA. The L1 stalk is quite mobile in the ribosome, and is involved in E site tRNA release. Functionally, protein L1 is also a translational repressor protein, it controls the translation of the L11 operon by binding to its mRNA. This is Large ribosomal subunit protein uL1 from Corynebacterium efficiens (strain DSM 44549 / YS-314 / AJ 12310 / JCM 11189 / NBRC 100395).